A 329-amino-acid chain; its full sequence is Proline/serine-rich coiled-coil protein 1 (329 aa).

S22 is modified (phosphoserine). Copy 1 of the repeat occupies 38 to 41 (PEKP). Phosphoserine occurs at positions 47, 65, and 70. Tandem repeats lie at residues 68–71 (PLSP) and 103–106 (PGRP). A 5 X 4 AA repeats of P-X-X-P region spans residues 68–215 (PLSPEKLEEI…ARTVASPPIP (148 aa)). Residues 70-94 (SPEKLEEILDEANRLAAQLEECALK) adopt a coiled-coil conformation. The interval 94–329 (KDSENAAAGP…RKAAVPGPTR (236 aa)) is disordered. Basic and acidic residues predominate over residues 114–126 (PRRETFVLKDSPV). Position 124 is a phosphoserine (S124). 2 stretches are compositionally biased toward polar residues: residues 132–148 (TVSSWSAPPPSNLTGLR) and 175–186 (PTCNLFSASKNP). T145 bears the Phosphothreonine mark. S189 is subject to Phosphoserine. A run of 2 repeats spans residues 194-197 (PTLP) and 212-215 (PPIP). Composition is skewed to low complexity over residues 219 to 231 (APQSSASNSQCSS) and 302 to 315 (GAARGRTSSAARGR).

The protein belongs to the PSRC1 family. As to quaternary structure, interacts with APC2. Interacts with KIF2A. Interacts with ANKRD53; recruits ANKRD53 to the spindle during mitosis. Phosphorylated during mitosis.

Its subcellular location is the cytoplasm. The protein resides in the cytoskeleton. It localises to the spindle. The protein localises to the spindle pole. Its function is as follows. Required for normal progression through mitosis. Required for normal congress of chromosomes at the metaphase plate, and for normal rate of chromosomal segregation during anaphase. Plays a role in the regulation of mitotic spindle dynamics. Increases the rate of turnover of microtubules on metaphase spindles, and contributes to the generation of normal tension across sister kinetochores. Recruits KIF2A and ANKRD53 to the mitotic spindle and spindle poles. May participate in p53/TP53-regulated growth suppression. This is Proline/serine-rich coiled-coil protein 1 (Psrc1) from Rattus norvegicus (Rat).